Consider the following 139-residue polypeptide: Large ribosomal subunit protein uL22 (139 aa).

Positions 118–139 (VEVESRPKKVASKSKSQKGSAR) are disordered. Over residues 125 to 139 (KKVASKSKSQKGSAR) the composition is skewed to basic residues.

Belongs to the universal ribosomal protein uL22 family. Part of the 50S ribosomal subunit.

This protein binds specifically to 23S rRNA; its binding is stimulated by other ribosomal proteins, e.g. L4, L17, and L20. It is important during the early stages of 50S assembly. It makes multiple contacts with different domains of the 23S rRNA in the assembled 50S subunit and ribosome. Its function is as follows. The globular domain of the protein is located near the polypeptide exit tunnel on the outside of the subunit, while an extended beta-hairpin is found that lines the wall of the exit tunnel in the center of the 70S ribosome. This is Large ribosomal subunit protein uL22 from Saccharopolyspora erythraea (strain ATCC 11635 / DSM 40517 / JCM 4748 / NBRC 13426 / NCIMB 8594 / NRRL 2338).